Consider the following 218-residue polypeptide: Peptide methionine sulfoxide reductase MsrA (218 aa).

Residue Cys57 is part of the active site.

The protein belongs to the MsrA Met sulfoxide reductase family.

It carries out the reaction L-methionyl-[protein] + [thioredoxin]-disulfide + H2O = L-methionyl-(S)-S-oxide-[protein] + [thioredoxin]-dithiol. The catalysed reaction is [thioredoxin]-disulfide + L-methionine + H2O = L-methionine (S)-S-oxide + [thioredoxin]-dithiol. In terms of biological role, has an important function as a repair enzyme for proteins that have been inactivated by oxidation. Catalyzes the reversible oxidation-reduction of methionine sulfoxide in proteins to methionine. The sequence is that of Peptide methionine sulfoxide reductase MsrA from Brucella melitensis biotype 1 (strain ATCC 23456 / CCUG 17765 / NCTC 10094 / 16M).